A 376-amino-acid chain; its full sequence is Zinc transporter 7 (376 aa).

Topologically, residues 1 to 37 (MLPLSIKDDEYKPPKFNLFRKISGWFRSILSDKTSRN) are cytoplasmic. The helical transmembrane segment at 38 to 58 (LFFFLCLNLSFAFVELLYGIW) threads the bilayer. Residues 59 to 67 (SNCLGLISD) are Lumenal-facing. A helical transmembrane segment spans residues 68–88 (SFHMFFDSTAILAGLAASVIS). Topologically, residues 89–102 (KWRDNDAFSYGYVR) are cytoplasmic. Residues 103-123 (AEVLAGFVNGLFLIFTAFFIF) traverse the membrane as a helical segment. At 124–140 (SEGVERALAPPDVHHER) the chain is on the lumenal side. Residues 141 to 161 (LLLVSILGFVVNLVGIFVFKH) traverse the membrane as a helical segment. A his-rich loop region spans residues 161 to 218 (HGGHGHSHGSGHGHSHSLFNGALDQTHGHGDHCHSHELKHGAAHSHDHAHGHGHFHSH). Residues 162-236 (GGHGHSHGSG…TGPSRQILQG (75 aa)) are Cytoplasmic-facing. The span at 188 to 222 (GHGDHCHSHELKHGAAHSHDHAHGHGHFHSHDGPS) shows a compositional bias: basic and acidic residues. The segment at 188–226 (GHGDHCHSHELKHGAAHSHDHAHGHGHFHSHDGPSLKET) is disordered. The chain crosses the membrane as a helical span at residues 237–257 (VFLHILADTLGSIGVIASAIM). Over 258–262 (MQNFG) the chain is Lumenal. A helical transmembrane segment spans residues 263 to 283 (LMIADPICSILIAMLIVISVI). The Cytoplasmic segment spans residues 284–376 (PLLRESVGIL…LYVQIDFAAM (93 aa)).

This sequence belongs to the cation diffusion facilitator (CDF) transporter (TC 2.A.4) family. SLC30A subfamily. As to quaternary structure, homooligomer.

The protein resides in the golgi apparatus membrane. The protein localises to the cytoplasmic vesicle. It is found in the golgi apparatus. It localises to the trans-Golgi network. Its subcellular location is the sarcoplasmic reticulum. The protein resides in the mitochondrion. It carries out the reaction Zn(2+)(in) = Zn(2+)(out). Functionally, zinc ion transporter mediating zinc entry from the cytosol into the lumen of organelles along the secretory pathway. By contributing to zinc ion homeostasis within the early secretory pathway, regulates the activation and folding of enzymes like alkaline phosphatases. The polypeptide is Zinc transporter 7 (SLC30A7) (Bos taurus (Bovine)).